A 409-amino-acid polypeptide reads, in one-letter code: Iron(III) salmochelin esterase (409 aa).

It belongs to the Fes family.

Its subcellular location is the cytoplasm. The catalysed reaction is Fe(III)-C-5-deoxy-beta-D-glucosyl-enterobactin + H2O = Fe(III)-{di[N-(2,3-dihydroxybenzoyl)-L-seryl]-N-(C-5-[deoxy-beta-D-glucosyl]-2,3-dihydroxybenzoyl)-L-serine} + H(+). It carries out the reaction Fe(III)-{di[N-(2,3-dihydroxybenzoyl)-L-seryl]-N-(C-5-[deoxy-beta-D-glucosyl]-2,3-dihydroxybenzoyl)-L-serine} + H2O + H(+) = Fe(III)-{N-(2,3-dihydroxybenzoyl)-L-seryl-N-(C-5-[deoxy-beta-D-glucosyl]-2,3-dihydroxybenzoyl)-L-serine} + N-(2,3-dihydroxybenzoyl)-L-serine. The enzyme catalyses Fe(III)-{N-(2,3-dihydroxybenzoyl)-L-seryl-[N-(C-5-[deoxy-beta-D-glucosyl]-2,3-dihydroxybenzoyl)-L-serine]2} + H2O + H(+) = Fe(III)-{N-(2,3-dihydroxybenzoyl)-L-seryl-N-(C-5-[deoxy-beta-D-glucosyl]-2,3-dihydroxybenzoyl)-L-serine} + N-(C-5-[deoxy-beta-D-glucosyl]-2,3-dihydroxybenzoyl)-L-serine. It catalyses the reaction Fe(III)-di(C-5-deoxy-beta-D-glucosyl)-enterobactin + H2O = Fe(III)-{N-(2,3-dihydroxybenzoyl)-L-seryl-[N-(C-5-[deoxy-beta-D-glucosyl]-2,3-dihydroxybenzoyl)-L-serine]2} + H(+). The catalysed reaction is Fe(III)-{N-(2,3-dihydroxybenzoyl)-L-seryl-[N-(C-5-[deoxy-beta-D-glucosyl]-2,3-dihydroxybenzoyl)-L-serine]2} + H2O + H(+) = Fe(III)-[N-(C-5-[deoxy-beta-D-glucosyl]-2,3-dihydroxybenzoyl)-L-serine]2 + N-(2,3-dihydroxybenzoyl)-L-serine. It carries out the reaction Fe(III)-[N-(C-5-[deoxy-beta-D-glucosyl]-2,3-dihydroxybenzoyl)-L-serine]2 + H2O + H(+) = Fe(III)-[N-(C-5-[deoxy-beta-D-glucosyl]-2,3-dihydroxybenzoyl)-L-serine] + N-(C-5-[deoxy-beta-D-glucosyl]-2,3-dihydroxybenzoyl)-L-serine. Its function is as follows. Catalyzes the hydrolysis of both the apo and Fe3(+)-bound forms of enterobactin (Ent), monoglucosyl-C-Ent (MGE), diglucosyl-C-Ent (DGE) and triglucosyl-C-Ent (TGE). Shows higher catalytic efficiencies on Fe3(+)-bound forms. The initial linear trimer products are, in turn, very good substrates for further hydrolytic cleavage by IroD, leading to complete degradation of the trilactone to DHB-Ser and/or Glc-DHB-Ser monomers. Hydrolyzes MGE and DGE regioselectively. May be the ferric MGE/DGE esterase responsible for cytoplasmic iron release. This chain is Iron(III) salmochelin esterase, found in Escherichia coli O6:H1 (strain CFT073 / ATCC 700928 / UPEC).